The sequence spans 147 residues: Acidic phospholipase A2 beta-bungarotoxin A3 chain (147 aa).

The first 19 residues, 1–19, serve as a signal peptide directing secretion; it reads MYPAHLLVLSAVCVSLLGA. The propeptide occupies 20–27; the sequence is ANIPPHPL. 6 disulfides stabilise this stretch: C54–C146, C56–C72, C71–C127, C78–C120, C88–C113, and C106–C118. Ca(2+)-binding residues include Y55, G57, and G59. Residue H75 is part of the active site. D76 serves as a coordination point for Ca(2+). D121 is an active-site residue.

This sequence belongs to the phospholipase A2 family. Group I subfamily. D49 sub-subfamily. In terms of assembly, heterodimer; disulfide-linked. The A chains have phospholipase A2 activity and the B chains show homology with the basic protease inhibitors. The A3 chain is found in beta-5 bungarotoxins. It depends on Ca(2+) as a cofactor. As to expression, expressed by the venom gland.

It is found in the secreted. It catalyses the reaction a 1,2-diacyl-sn-glycero-3-phosphocholine + H2O = a 1-acyl-sn-glycero-3-phosphocholine + a fatty acid + H(+). In terms of biological role, snake venom phospholipase A2 (PLA2) that inhibits neuromuscular transmission by blocking acetylcholine release from the nerve termini. PLA2 catalyzes the calcium-dependent hydrolysis of the 2-acyl groups in 3-sn-phosphoglycerides. The protein is Acidic phospholipase A2 beta-bungarotoxin A3 chain of Bungarus multicinctus (Many-banded krait).